A 369-amino-acid chain; its full sequence is DNA replication and repair protein RecF (369 aa).

30–37 (GENGQGKT) lines the ATP pocket.

This sequence belongs to the RecF family.

The protein resides in the cytoplasm. Its function is as follows. The RecF protein is involved in DNA metabolism; it is required for DNA replication and normal SOS inducibility. RecF binds preferentially to single-stranded, linear DNA. It also seems to bind ATP. This is DNA replication and repair protein RecF from Anaeromyxobacter sp. (strain Fw109-5).